Here is a 135-residue protein sequence, read N- to C-terminus: Phosphoribosyl-AMP cyclohydrolase (135 aa).

Mg(2+) is bound at residue D78. Position 79 (C79) interacts with Zn(2+). Residues D80 and D82 each coordinate Mg(2+). Residues C96 and C103 each contribute to the Zn(2+) site.

The protein belongs to the PRA-CH family. In terms of assembly, homodimer. It depends on Mg(2+) as a cofactor. Requires Zn(2+) as cofactor.

It is found in the cytoplasm. It catalyses the reaction 1-(5-phospho-beta-D-ribosyl)-5'-AMP + H2O = 1-(5-phospho-beta-D-ribosyl)-5-[(5-phospho-beta-D-ribosylamino)methylideneamino]imidazole-4-carboxamide. Its pathway is amino-acid biosynthesis; L-histidine biosynthesis; L-histidine from 5-phospho-alpha-D-ribose 1-diphosphate: step 3/9. Catalyzes the hydrolysis of the adenine ring of phosphoribosyl-AMP. This chain is Phosphoribosyl-AMP cyclohydrolase, found in Cupriavidus metallidurans (strain ATCC 43123 / DSM 2839 / NBRC 102507 / CH34) (Ralstonia metallidurans).